Consider the following 493-residue polypeptide: Geraniol 8-hydroxylase (493 aa).

Residues 1–6 (MDYLTI) are Lumenal-facing. The helical transmembrane segment at 7-23 (ILTLLFALTLYEAFSYL) threads the bilayer. Residues 24–493 (SRRTKNLPPG…HPLRAVPSTL (470 aa)) are Cytoplasmic-facing. C436 lines the heme pocket.

Belongs to the cytochrome P450 family. Requires heme as cofactor. In terms of tissue distribution, expressed in roots, stems, leaves and flower buds. Hardly detected in mature flowers and fruits. Expressed in the internal phloem-associated parenchyma.

The protein resides in the endoplasmic reticulum membrane. It carries out the reaction (2E)-geraniol + reduced [NADPH--hemoprotein reductase] + O2 = (6E)-8-hydroxygeraniol + oxidized [NADPH--hemoprotein reductase] + H2O + H(+). Hydroxylase involved in the biosynthesis of hydroxygeraniol, a precursor of the terpenoid indole alkaloids such as vinblastine and vincristine. Also able to hydroxylate in vitro nerol and to catalyze 3'-hydroxylation of the flavanone naringenin to form eriodictyol. No activity with apigenin, kaempferol, p-coumaric acid and ferulic acid as substrates. This Catharanthus roseus (Madagascar periwinkle) protein is Geraniol 8-hydroxylase (CYP76B6).